The primary structure comprises 145 residues: U1 small nuclear ribonucleoprotein C (145 aa).

The segment at 4 to 36 adopts a Matrin-type zinc-finger fold; it reads YYCDYCDTYLTHDSPSVRKTHCTGRKHRDNVKF. Residues 67-91 form a disordered region; the sequence is FAGGPGGAPPKPAGVSIPPPNMGAP. Over residues 73–91 the composition is skewed to pro residues; sequence GAPPKPAGVSIPPPNMGAP.

It belongs to the U1 small nuclear ribonucleoprotein C family. As to quaternary structure, U1 snRNP is composed of the 7 core Sm proteins B/B', D1, D2, D3, E, F and G that assemble in a heptameric protein ring on the Sm site of the small nuclear RNA to form the core snRNP, and at least 3 U1 snRNP-specific proteins U1-70K, U1-A and U1-C. U1-C interacts with U1 snRNA and the 5' splice-site region of the pre-mRNA.

The protein resides in the nucleus. Functionally, component of the spliceosomal U1 snRNP, which is essential for recognition of the pre-mRNA 5' splice-site and the subsequent assembly of the spliceosome. U1-C is directly involved in initial 5' splice-site recognition for both constitutive and regulated alternative splicing. The interaction with the 5' splice-site seems to precede base-pairing between the pre-mRNA and the U1 snRNA. Stimulates commitment or early (E) complex formation by stabilizing the base pairing of the 5' end of the U1 snRNA and the 5' splice-site region. Regulates alternative splicing of a distinct group of target genes. The protein is U1 small nuclear ribonucleoprotein C of Drosophila melanogaster (Fruit fly).